Consider the following 183-residue polypeptide: MIIKREMRQDKRAAPKAPINENISAREVRLIGADGEQIGIVSIDEALRIAEESKLDLVEISADAIPPVCRVMDYGKSIFEKKKQVAAAKKNQKQIQVKEIKFRPGTEEGDYQVKLRNLVRFLSDGDRAKVSLRFRGREMAHQELGMELLKRVEADLLEYGSVEQHPKMEGRQLIMVIAPKKKK.

Belongs to the IF-3 family. In terms of assembly, monomer.

Its subcellular location is the cytoplasm. Its function is as follows. IF-3 binds to the 30S ribosomal subunit and shifts the equilibrium between 70S ribosomes and their 50S and 30S subunits in favor of the free subunits, thus enhancing the availability of 30S subunits on which protein synthesis initiation begins. This chain is Translation initiation factor IF-3, found in Pseudomonas fluorescens (strain SBW25).